We begin with the raw amino-acid sequence, 445 residues long: Signal recognition particle 54 kDa protein (445 aa).

GTP contacts are provided by residues 106-113 (GLQGSGKT), 186-190 (DTAGR), and 244-247 (TKLD).

Belongs to the GTP-binding SRP family. SRP54 subfamily. In terms of assembly, part of the signal recognition particle protein translocation system, which is composed of SRP and FtsY. Archaeal SRP consists of a 7S RNA molecule of 300 nucleotides and two protein subunits: SRP54 and SRP19.

The protein localises to the cytoplasm. The catalysed reaction is GTP + H2O = GDP + phosphate + H(+). Its function is as follows. Involved in targeting and insertion of nascent membrane proteins into the cytoplasmic membrane. Binds to the hydrophobic signal sequence of the ribosome-nascent chain (RNC) as it emerges from the ribosomes. The SRP-RNC complex is then targeted to the cytoplasmic membrane where it interacts with the SRP receptor FtsY. The protein is Signal recognition particle 54 kDa protein of Methanobrevibacter smithii (strain ATCC 35061 / DSM 861 / OCM 144 / PS).